Here is a 483-residue protein sequence, read N- to C-terminus: Regulatory protein ViaA (483 aa).

Belongs to the ViaA family. Homodimer. Interacts with RavA.

The protein resides in the cytoplasm. Its function is as follows. Component of the RavA-ViaA chaperone complex, which may act on the membrane to optimize the function of some of the respiratory chains. ViaA stimulates the ATPase activity of RavA. This is Regulatory protein ViaA from Escherichia coli (strain 55989 / EAEC).